The sequence spans 163 residues: Large ribosomal subunit protein uL10 (163 aa).

It belongs to the universal ribosomal protein uL10 family. Part of the ribosomal stalk of the 50S ribosomal subunit. The N-terminus interacts with L11 and the large rRNA to form the base of the stalk. The C-terminus forms an elongated spine to which L12 dimers bind in a sequential fashion forming a multimeric L10(L12)X complex.

In terms of biological role, forms part of the ribosomal stalk, playing a central role in the interaction of the ribosome with GTP-bound translation factors. This Haemophilus influenzae (strain PittEE) protein is Large ribosomal subunit protein uL10.